Reading from the N-terminus, the 229-residue chain is Large ribosomal subunit protein uL1 (229 aa).

The protein belongs to the universal ribosomal protein uL1 family. As to quaternary structure, part of the 50S ribosomal subunit.

In terms of biological role, binds directly to 23S rRNA. The L1 stalk is quite mobile in the ribosome, and is involved in E site tRNA release. Protein L1 is also a translational repressor protein, it controls the translation of the L11 operon by binding to its mRNA. In Streptococcus pyogenes serotype M1, this protein is Large ribosomal subunit protein uL1.